We begin with the raw amino-acid sequence, 298 residues long: Acetylglutamate kinase (298 aa).

Substrate is bound by residues 69 to 70, arginine 91, and asparagine 196; that span reads GG.

Belongs to the acetylglutamate kinase family. ArgB subfamily.

It localises to the cytoplasm. It carries out the reaction N-acetyl-L-glutamate + ATP = N-acetyl-L-glutamyl 5-phosphate + ADP. The protein operates within amino-acid biosynthesis; L-arginine biosynthesis; N(2)-acetyl-L-ornithine from L-glutamate: step 2/4. Catalyzes the ATP-dependent phosphorylation of N-acetyl-L-glutamate. This chain is Acetylglutamate kinase, found in Granulibacter bethesdensis (strain ATCC BAA-1260 / CGDNIH1).